A 340-amino-acid polypeptide reads, in one-letter code: Ribosomal RNA large subunit methyltransferase F (340 aa).

Belongs to the methyltransferase superfamily. METTL16/RlmF family.

It is found in the cytoplasm. The catalysed reaction is adenosine(1618) in 23S rRNA + S-adenosyl-L-methionine = N(6)-methyladenosine(1618) in 23S rRNA + S-adenosyl-L-homocysteine + H(+). In terms of biological role, specifically methylates the adenine in position 1618 of 23S rRNA. The chain is Ribosomal RNA large subunit methyltransferase F from Dechloromonas aromatica (strain RCB).